The primary structure comprises 1280 residues: Clustered mitochondria protein homolog (1280 aa).

The segment covering 1–27 (MAASSNDASKSAMANSNVTTEVAQTPS) has biased composition (polar residues). Disordered stretches follow at residues 1–49 (MAAS…GQLP) and 169–189 (GLDQ…LADY). A compositionally biased stretch (acidic residues) spans 32–43 (VNGEVEATEEDG). Residues 338 to 582 (DLARTQESYL…RLTPLDVAWI (245 aa)) enclose the Clu domain. Disordered stretches follow at residues 633–669 (KANK…EPEQ), 905–943 (GAAV…AVSL), and 1214–1280 (TGRN…TQKP). The span at 635-648 (NKARGGRRRLPKAQ) shows a compositional bias: basic residues. The span at 649-669 (KKADAGKEVDGEKKAEAEPEQ) shows a compositional bias: basic and acidic residues. The segment covering 1221-1235 (PAAATPSVSDAAAAA) has biased composition (low complexity). The segment covering 1245–1261 (VDQRKIEDLLKYIEGES) has biased composition (basic and acidic residues). Residues 1265–1280 (PTKKRTQNPRKRTQKP) show a composition bias toward basic residues.

The protein belongs to the CLU family. May associate with the eukaryotic translation initiation factor 3 (eIF-3) complex.

The protein localises to the cytoplasm. In terms of biological role, mRNA-binding protein involved in proper cytoplasmic distribution of mitochondria. This chain is Clustered mitochondria protein homolog, found in Phaeosphaeria nodorum (strain SN15 / ATCC MYA-4574 / FGSC 10173) (Glume blotch fungus).